The following is a 293-amino-acid chain: Ribosomal protein L11 methyltransferase (293 aa).

Residues Thr-145, Gly-166, Asp-188, and Asn-230 each contribute to the S-adenosyl-L-methionine site.

Belongs to the methyltransferase superfamily. PrmA family.

It localises to the cytoplasm. The enzyme catalyses L-lysyl-[protein] + 3 S-adenosyl-L-methionine = N(6),N(6),N(6)-trimethyl-L-lysyl-[protein] + 3 S-adenosyl-L-homocysteine + 3 H(+). Functionally, methylates ribosomal protein L11. This chain is Ribosomal protein L11 methyltransferase, found in Salmonella heidelberg (strain SL476).